The sequence spans 118 residues: MSDNPQEYELDWDVEKRLKLNDAGLVPAIVQADGTNEVLMMAWMDTHALAYTLATRRGTYFSRSRNEYWIKGLTSGNVQEVTGLALDCDGDTVLLTVKQTGGACHTGAHTCFDNDVLL.

Position 87 (D87) interacts with Mg(2+). Residue C88 coordinates Zn(2+). Mg(2+) contacts are provided by D89 and D91. Zn(2+)-binding residues include C104 and C111.

Belongs to the PRA-CH family. In terms of assembly, homodimer. Mg(2+) serves as cofactor. It depends on Zn(2+) as a cofactor.

It is found in the cytoplasm. It catalyses the reaction 1-(5-phospho-beta-D-ribosyl)-5'-AMP + H2O = 1-(5-phospho-beta-D-ribosyl)-5-[(5-phospho-beta-D-ribosylamino)methylideneamino]imidazole-4-carboxamide. The protein operates within amino-acid biosynthesis; L-histidine biosynthesis; L-histidine from 5-phospho-alpha-D-ribose 1-diphosphate: step 3/9. In terms of biological role, catalyzes the hydrolysis of the adenine ring of phosphoribosyl-AMP. This Corynebacterium glutamicum (strain ATCC 13032 / DSM 20300 / JCM 1318 / BCRC 11384 / CCUG 27702 / LMG 3730 / NBRC 12168 / NCIMB 10025 / NRRL B-2784 / 534) protein is Phosphoribosyl-AMP cyclohydrolase.